Reading from the N-terminus, the 915-residue chain is Probable LRR receptor-like serine/threonine-protein kinase At2g16250 (915 aa).

An N-terminal signal peptide occupies residues 1-28 (MVDQRRSALGFVLLLLCLVLFFDCVVVG). The Extracellular portion of the chain corresponds to 29-451 (QTQSRFSEKL…ISRRTVIILA (423 aa)). Asn71, Asn78, Asn101, Asn109, Asn150, Asn158, and Asn177 each carry an N-linked (GlcNAc...) asparagine glycan. LRR repeat units lie at residues 102–125 (LTRL…WFGV), 127–150 (LLAL…TLGN), 151–174 (LTSL…SLGQ), 176–198 (LNLS…SFSS), 199–223 (LKNL…LGAL), 225–247 (KLIH…LGDL), 248–271 (VNLV…LRKL), 272–295 (SKLQ…LFSA), 297–320 (SQLQ…CWSL), 321–344 (PKLR…SYDS), and 366–390 (LRRF…VTGE). Asn230 carries N-linked (GlcNAc...) asparagine glycosylation. A glycan (N-linked (GlcNAc...) asparagine) is linked at Asn332. N-linked (GlcNAc...) asparagine glycosylation is found at Asn391, Asn429, and Asn437. Residues 452 to 472 (AVGGGVAFILLFVILPIILVL) traverse the membrane as a helical segment. The Cytoplasmic segment spans residues 473–915 (CMRHRRRAAQ…AAYGVVEDNL (443 aa)). The interval 482–503 (QRGNNDRPKPAGEASQQPPKGA) is disordered. The region spanning 527–811 (FNDANLIKRG…IVNALENPLK (285 aa)) is the Protein kinase domain. Residues 533-541 (IKRGHSGNL) and Lys555 each bind ATP. Asp657 serves as the catalytic Proton acceptor. Residues 851–915 (TAVQAGATTS…AAYGVVEDNL (65 aa)) form a disordered region. Residues 859-870 (TSGGGGGGGGNG) are compositionally biased toward gly residues. Residues 871 to 892 (LRNSGSQGSSGRNNNNNGNSSS) show a composition bias toward low complexity.

Belongs to the protein kinase superfamily. Ser/Thr protein kinase family.

The protein resides in the membrane. The catalysed reaction is L-seryl-[protein] + ATP = O-phospho-L-seryl-[protein] + ADP + H(+). The enzyme catalyses L-threonyl-[protein] + ATP = O-phospho-L-threonyl-[protein] + ADP + H(+). The polypeptide is Probable LRR receptor-like serine/threonine-protein kinase At2g16250 (Arabidopsis thaliana (Mouse-ear cress)).